The following is a 948-amino-acid chain: Phosphoenolpyruvate carboxylase (948 aa).

Active-site residues include His138 and Lys610.

It belongs to the PEPCase type 1 family. Mg(2+) serves as cofactor.

It carries out the reaction oxaloacetate + phosphate = phosphoenolpyruvate + hydrogencarbonate. Functionally, forms oxaloacetate, a four-carbon dicarboxylic acid source for the tricarboxylic acid cycle. In Streptococcus sanguinis (strain SK36), this protein is Phosphoenolpyruvate carboxylase.